The primary structure comprises 456 residues: Bifunctional protein GlmU (456 aa).

The interval 1-229 (MLNSAMSVVI…ISETDGVNNR (229 aa)) is pyrophosphorylase. UDP-N-acetyl-alpha-D-glucosamine contacts are provided by residues 11-14 (LAAG), K25, Q76, 81-82 (GT), 103-105 (YGD), G140, E154, N169, and N227. Position 105 (D105) interacts with Mg(2+). N227 serves as a coordination point for Mg(2+). The tract at residues 230-250 (LQLSRLERIYQAEQAEKLLLS) is linker. Residues 251–456 (GVMLRDPARF…QGWQRPVKKK (206 aa)) form an N-acetyltransferase region. R333 and K351 together coordinate UDP-N-acetyl-alpha-D-glucosamine. Catalysis depends on H363, which acts as the Proton acceptor. Positions 366 and 377 each coordinate UDP-N-acetyl-alpha-D-glucosamine. Acetyl-CoA-binding positions include A380, 386–387 (NY), S405, A423, and R440.

The protein in the N-terminal section; belongs to the N-acetylglucosamine-1-phosphate uridyltransferase family. This sequence in the C-terminal section; belongs to the transferase hexapeptide repeat family. Homotrimer. It depends on Mg(2+) as a cofactor.

It localises to the cytoplasm. The enzyme catalyses alpha-D-glucosamine 1-phosphate + acetyl-CoA = N-acetyl-alpha-D-glucosamine 1-phosphate + CoA + H(+). It catalyses the reaction N-acetyl-alpha-D-glucosamine 1-phosphate + UTP + H(+) = UDP-N-acetyl-alpha-D-glucosamine + diphosphate. It participates in nucleotide-sugar biosynthesis; UDP-N-acetyl-alpha-D-glucosamine biosynthesis; N-acetyl-alpha-D-glucosamine 1-phosphate from alpha-D-glucosamine 6-phosphate (route II): step 2/2. The protein operates within nucleotide-sugar biosynthesis; UDP-N-acetyl-alpha-D-glucosamine biosynthesis; UDP-N-acetyl-alpha-D-glucosamine from N-acetyl-alpha-D-glucosamine 1-phosphate: step 1/1. Its pathway is bacterial outer membrane biogenesis; LPS lipid A biosynthesis. Its function is as follows. Catalyzes the last two sequential reactions in the de novo biosynthetic pathway for UDP-N-acetylglucosamine (UDP-GlcNAc). The C-terminal domain catalyzes the transfer of acetyl group from acetyl coenzyme A to glucosamine-1-phosphate (GlcN-1-P) to produce N-acetylglucosamine-1-phosphate (GlcNAc-1-P), which is converted into UDP-GlcNAc by the transfer of uridine 5-monophosphate (from uridine 5-triphosphate), a reaction catalyzed by the N-terminal domain. The chain is Bifunctional protein GlmU from Salmonella agona (strain SL483).